The chain runs to 209 residues: Pyridoxal 5'-phosphate synthase subunit PdxT (209 aa).

Residue 58-60 (GES) coordinates L-glutamine. The active-site Nucleophile is C90. Residues R119 and 148–149 (IR) each bind L-glutamine. Active-site charge relay system residues include H185 and E187.

The protein belongs to the glutaminase PdxT/SNO family. As to quaternary structure, in the presence of PdxS, forms a dodecamer of heterodimers. Only shows activity in the heterodimer.

The catalysed reaction is aldehydo-D-ribose 5-phosphate + D-glyceraldehyde 3-phosphate + L-glutamine = pyridoxal 5'-phosphate + L-glutamate + phosphate + 3 H2O + H(+). It carries out the reaction L-glutamine + H2O = L-glutamate + NH4(+). It functions in the pathway cofactor biosynthesis; pyridoxal 5'-phosphate biosynthesis. Its function is as follows. Catalyzes the hydrolysis of glutamine to glutamate and ammonia as part of the biosynthesis of pyridoxal 5'-phosphate. The resulting ammonia molecule is channeled to the active site of PdxS. This chain is Pyridoxal 5'-phosphate synthase subunit PdxT, found in Clavibacter sepedonicus (Clavibacter michiganensis subsp. sepedonicus).